A 506-amino-acid chain; its full sequence is Histidine ammonia-lyase (506 aa).

Residues 143 to 145 constitute a cross-link (5-imidazolinone (Ala-Gly)); the sequence is ASG. The residue at position 144 (S144) is a 2,3-didehydroalanine (Ser).

The protein belongs to the PAL/histidase family. Contains an active site 4-methylidene-imidazol-5-one (MIO), which is formed autocatalytically by cyclization and dehydration of residues Ala-Ser-Gly.

The protein localises to the cytoplasm. The enzyme catalyses L-histidine = trans-urocanate + NH4(+). It functions in the pathway amino-acid degradation; L-histidine degradation into L-glutamate; N-formimidoyl-L-glutamate from L-histidine: step 1/3. This chain is Histidine ammonia-lyase, found in Salmonella gallinarum (strain 287/91 / NCTC 13346).